The sequence spans 805 residues: Pentatricopeptide repeat-containing protein At4g01570 (805 aa).

PPR repeat units lie at residues 91–125 (SATA…GVNL), 126–160 (DQTM…GDCL), 161–196 (NPSV…DNHS), 211–241 (GTVA…LKGM), 247–277 (DTWS…MKER), 288–322 (DICT…GHEP), 323–357 (DNST…GFVP), 358–392 (DTIV…GVRA), 393–427 (SCWT…GQFV), 428–462 (DAIT…GFSV), 463–497 (DLVT…NLVP), 593–627 (DVDM…GVTD), 629–663 (TSYT…FCAA), 664–698 (DIAT…GGYL), 699–733 (DIVM…GINP), and 734–768 (DVVS…GCLP).

It belongs to the PPR family. P subfamily.

This chain is Pentatricopeptide repeat-containing protein At4g01570, found in Arabidopsis thaliana (Mouse-ear cress).